A 192-amino-acid chain; its full sequence is MIAIIDYGLGNISNVTRAIQHLGYDVILTCNDKDVQKAEAIVLPGVGHFQDAMHSIEEKSIKDMLKNIHDKPVIGICLGMQLLFQHSAEGDVSGLELVPGNIVPIQSSHPIPHLGWNELKSTHPLLQSDVYFVHSYQAEMSEYVVAYADYGTKIPGVIQYRNYIGIQFHPEKSGTYGLEILNQALKGGFIND.

Residues 1–192 (MIAIIDYGLG…QALKGGFIND (192 aa)) form the Glutamine amidotransferase type-1 domain. Cys77 functions as the Nucleophile in the catalytic mechanism. Active-site residues include His169 and Glu171.

In terms of assembly, heterodimer of HisH and HisF.

The protein resides in the cytoplasm. The enzyme catalyses 5-[(5-phospho-1-deoxy-D-ribulos-1-ylimino)methylamino]-1-(5-phospho-beta-D-ribosyl)imidazole-4-carboxamide + L-glutamine = D-erythro-1-(imidazol-4-yl)glycerol 3-phosphate + 5-amino-1-(5-phospho-beta-D-ribosyl)imidazole-4-carboxamide + L-glutamate + H(+). The catalysed reaction is L-glutamine + H2O = L-glutamate + NH4(+). The protein operates within amino-acid biosynthesis; L-histidine biosynthesis; L-histidine from 5-phospho-alpha-D-ribose 1-diphosphate: step 5/9. Its function is as follows. IGPS catalyzes the conversion of PRFAR and glutamine to IGP, AICAR and glutamate. The HisH subunit catalyzes the hydrolysis of glutamine to glutamate and ammonia as part of the synthesis of IGP and AICAR. The resulting ammonia molecule is channeled to the active site of HisF. The sequence is that of Imidazole glycerol phosphate synthase subunit HisH from Staphylococcus epidermidis (strain ATCC 12228 / FDA PCI 1200).